The sequence spans 313 residues: Cytochrome c biogenesis protein CcsA (313 aa).

8 helical membrane-spanning segments follow: residues 9 to 29, 44 to 64, 71 to 91, 101 to 121, 143 to 163, 217 to 237, 244 to 264, and 278 to 298; these read ILTHISFSIVSIVITIHLITL, GIIVTFFCITGLLVTRWISSG, LYESLIFLSWSFSLIHIIPYF, IIGPSAIFTQGFATSGILTEI, MILGYAALLCGSLLSVALLVI, VISLGFTFLTIGILSGAVWAN, WNWDPKETWAFITWIVFAIYL, and AIVASIGFLIIWICYFGVNLL.

This sequence belongs to the CcmF/CycK/Ccl1/NrfE/CcsA family. In terms of assembly, may interact with Ccs1.

It is found in the plastid. The protein localises to the chloroplast thylakoid membrane. Required during biogenesis of c-type cytochromes (cytochrome c6 and cytochrome f) at the step of heme attachment. In Nicotiana tomentosiformis (Tobacco), this protein is Cytochrome c biogenesis protein CcsA.